The following is a 252-amino-acid chain: NAP1-related protein 2 (252 aa).

Residues 1 to 15 are compositionally biased toward basic and acidic residues; that stretch reads MTAPADKGKKAKTDA. The tract at residues 1–23 is disordered; the sequence is MTAPADKGKKAKTDADGGAAEEN. A coiled-coil region spans residues 26–67; it reads IDGALVLSIEKLQEIQDELEKVNEEASDKVLEVEQKYSEIRR. The disordered stretch occupies residues 222–252; that stretch reads YFNNEAEELGEDDDEEGSDADEGEEDEEEEN. Over residues 226 to 252 the composition is skewed to acidic residues; that stretch reads EAEELGEDDDEEGSDADEGEEDEEEEN.

It belongs to the nucleosome assembly protein (NAP) family.

It is found in the nucleus. The protein resides in the cytoplasm. Acts as a histone H2A/H2B chaperone in nucleosome assembly. This Oryza sativa subsp. indica (Rice) protein is NAP1-related protein 2.